The primary structure comprises 335 residues: Ketol-acid reductoisomerase (NADP(+)) (335 aa).

The KARI N-terminal Rossmann domain occupies 1–182 (MATIIYDDET…GATRAGVYET (182 aa)). NADP(+) is bound by residues 25–28 (YGSQ), R48, S51, S53, and 83–86 (DEKQ). The active site involves H108. An NADP(+)-binding site is contributed by G134. The KARI C-terminal knotted domain occupies 183–328 (TFREETETDL…KQIRANIPWL (146 aa)). Mg(2+) is bound by residues D191, E195, E227, and E231. S252 provides a ligand contact to substrate.

The protein belongs to the ketol-acid reductoisomerase family. Mg(2+) is required as a cofactor.

It carries out the reaction (2R)-2,3-dihydroxy-3-methylbutanoate + NADP(+) = (2S)-2-acetolactate + NADPH + H(+). It catalyses the reaction (2R,3R)-2,3-dihydroxy-3-methylpentanoate + NADP(+) = (S)-2-ethyl-2-hydroxy-3-oxobutanoate + NADPH + H(+). The protein operates within amino-acid biosynthesis; L-isoleucine biosynthesis; L-isoleucine from 2-oxobutanoate: step 2/4. It functions in the pathway amino-acid biosynthesis; L-valine biosynthesis; L-valine from pyruvate: step 2/4. Functionally, involved in the biosynthesis of branched-chain amino acids (BCAA). Catalyzes an alkyl-migration followed by a ketol-acid reduction of (S)-2-acetolactate (S2AL) to yield (R)-2,3-dihydroxy-isovalerate. In the isomerase reaction, S2AL is rearranged via a Mg-dependent methyl migration to produce 3-hydroxy-3-methyl-2-ketobutyrate (HMKB). In the reductase reaction, this 2-ketoacid undergoes a metal-dependent reduction by NADPH to yield (R)-2,3-dihydroxy-isovalerate. This chain is Ketol-acid reductoisomerase (NADP(+)), found in Methanosarcina mazei (strain ATCC BAA-159 / DSM 3647 / Goe1 / Go1 / JCM 11833 / OCM 88) (Methanosarcina frisia).